The sequence spans 65 residues: Large ribosomal subunit protein bL33c (65 aa).

Belongs to the bacterial ribosomal protein bL33 family.

Its subcellular location is the plastid. The protein resides in the chloroplast. The sequence is that of Large ribosomal subunit protein bL33c from Psilotum nudum (Whisk fern).